Reading from the N-terminus, the 193-residue chain is Putative nitroreductase HBN1 (193 aa).

Residue Ser2 is modified to N-acetylserine.

It belongs to the nitroreductase family. It depends on FMN as a cofactor.

The protein resides in the cytoplasm. The protein localises to the nucleus. This chain is Putative nitroreductase HBN1 (HBN1), found in Saccharomyces cerevisiae (strain ATCC 204508 / S288c) (Baker's yeast).